The following is a 503-amino-acid chain: 3-octaprenyl-4-hydroxybenzoate carboxy-lyase (503 aa).

Asparagine 176 contributes to the Mn(2+) binding site. Residues 179–181, 193–195, and 198–199 contribute to the prenylated FMN site; these read IYR, RWL, and RG. Glutamate 242 is a Mn(2+) binding site. The active-site Proton donor is aspartate 303.

The protein belongs to the UbiD family. In terms of assembly, homohexamer. It depends on prenylated FMN as a cofactor. Mn(2+) is required as a cofactor.

The protein localises to the cell membrane. It catalyses the reaction a 4-hydroxy-3-(all-trans-polyprenyl)benzoate + H(+) = a 2-(all-trans-polyprenyl)phenol + CO2. Its pathway is cofactor biosynthesis; ubiquinone biosynthesis. Its function is as follows. Catalyzes the decarboxylation of 3-octaprenyl-4-hydroxy benzoate to 2-octaprenylphenol, an intermediate step in ubiquinone biosynthesis. This is 3-octaprenyl-4-hydroxybenzoate carboxy-lyase from Ralstonia pickettii (strain 12J).